We begin with the raw amino-acid sequence, 588 residues long: Lysine--tRNA ligase (588 aa).

Residues 1 to 10 (MDSSVSTEPL) show a composition bias toward polar residues. The disordered stretch occupies residues 1 to 54 (MDSSVSTEPLSKNALKREKKAKEKEQLEQEKKAAAVAKRQMEQHNLPENDDLDP). Basic and acidic residues predominate over residues 20–47 (KAKEKEQLEQEKKAAAVAKRQMEQHNLP).

The protein belongs to the class-II aminoacyl-tRNA synthetase family.

The protein localises to the cytoplasm. It carries out the reaction tRNA(Lys) + L-lysine + ATP = L-lysyl-tRNA(Lys) + AMP + diphosphate. The protein is Lysine--tRNA ligase (LYSRS) of Solanum lycopersicum (Tomato).